We begin with the raw amino-acid sequence, 236 residues long: Uridylate kinase (236 aa).

10-13 (KLSG) lines the ATP pocket. Glycine 52 provides a ligand contact to UMP. Residues glycine 53 and arginine 57 each coordinate ATP. Residues aspartate 72 and 133 to 140 (TGNPFFTT) each bind UMP. ATP contacts are provided by threonine 160, tyrosine 166, and aspartate 169.

The protein belongs to the UMP kinase family. Homohexamer.

The protein localises to the cytoplasm. The catalysed reaction is UMP + ATP = UDP + ADP. It participates in pyrimidine metabolism; CTP biosynthesis via de novo pathway; UDP from UMP (UMPK route): step 1/1. Inhibited by UTP. Its function is as follows. Catalyzes the reversible phosphorylation of UMP to UDP. This chain is Uridylate kinase, found in Phocaeicola vulgatus (strain ATCC 8482 / DSM 1447 / JCM 5826 / CCUG 4940 / NBRC 14291 / NCTC 11154) (Bacteroides vulgatus).